We begin with the raw amino-acid sequence, 247 residues long: PF03932 family protein CutC (247 aa).

Belongs to the CutC family.

It localises to the cytoplasm. In Klebsiella pneumoniae subsp. pneumoniae (strain ATCC 700721 / MGH 78578), this protein is PF03932 family protein CutC.